Here is a 57-residue protein sequence, read N- to C-terminus: UPF0391 membrane protein RPD_3366 (57 aa).

2 helical membrane-spanning segments follow: residues 4–24 (WVVTFLVVALIAGILGFGGIA) and 30–50 (IAKVIFFIAVVLFLISAVVGL).

The protein belongs to the UPF0391 family.

It localises to the cell membrane. The chain is UPF0391 membrane protein RPD_3366 from Rhodopseudomonas palustris (strain BisB5).